The following is a 389-amino-acid chain: Nucleic acid dioxygenase ALKBH1 (389 aa).

An interaction with DNAJB6 region spans residues 1–127 (MGKMAAAVAS…CLKLYSQKPN (127 aa)). The tract at residues 86–389 (SKWRAYGLEG…VKRKRLNPNS (304 aa)) is tRNA-binding. Substrate-binding positions include Trp144 and 175 to 177 (YHY). One can recognise a Fe2OG dioxygenase domain in the interval 213–347 (QAEAGILNYY…RVNMTVRQVL (135 aa)). 2-oxoglutarate is bound at residue 220–222 (NYY). His231, Asp233, and His287 together coordinate Fe cation. Residue Asp233 coordinates substrate. 338-344 (RVNMTVR) provides a ligand contact to 2-oxoglutarate.

In terms of assembly, monomer. Interacts with DNAJB6. The cofactor is Fe(2+). In adult organs, highly expressed in testis, eye, brain and kidney.

Its subcellular location is the nucleus. The enzyme catalyses an N(6)-methyl-2'-deoxyadenosine in DNA + 2-oxoglutarate + O2 = a 2'-deoxyadenosine in DNA + formaldehyde + succinate + CO2. It catalyses the reaction 2'-deoxyribonucleotide-(2'-deoxyribose 5'-phosphate)-2'-deoxyribonucleotide-DNA = a 3'-end 2'-deoxyribonucleotide-(2,3-dehydro-2,3-deoxyribose 5'-phosphate)-DNA + a 5'-end 5'-phospho-2'-deoxyribonucleoside-DNA + H(+). The catalysed reaction is a methylated nucleobase within DNA + 2-oxoglutarate + O2 = a nucleobase within DNA + formaldehyde + succinate + CO2. It carries out the reaction an N(1)-methyladenosine in tRNA + 2-oxoglutarate + O2 = an adenosine in tRNA + formaldehyde + succinate + CO2. The enzyme catalyses 5-methylcytidine(34) in mitochondrial tRNA(Met) + 2 2-oxoglutarate + 2 O2 = 5-formylcytidine(34) in mitochondrial tRNA(Met) + 2 succinate + 2 CO2 + H2O. It catalyses the reaction an N(3)-methylcytidine in mRNA + 2-oxoglutarate + O2 = a cytidine in mRNA + formaldehyde + succinate + CO2. The catalysed reaction is N(1)-methyladenosine(58) in tRNA + 2-oxoglutarate + O2 = adenosine(58) in tRNA + formaldehyde + succinate + CO2. In terms of biological role, dioxygenase that acts on nucleic acids, such as DNA and tRNA. Requires molecular oxygen, alpha-ketoglutarate and iron. A number of activities have been described for this dioxygenase, but recent results suggest that it mainly acts on tRNAs and mediates their demethylation or oxidation depending on the context and subcellular compartment. Mainly acts as a tRNA demethylase by removing N(1)-methyladenine from various tRNAs, with a preference for N(1)-methyladenine at position 58 (m1A58) present on a stem loop structure of tRNAs. Acts as a regulator of translation initiation and elongation in response to glucose deprivation: regulates both translation initiation, by mediating demethylation of tRNA(Met), and translation elongation, N(1)-methyladenine-containing tRNAs being preferentially recruited to polysomes to promote translation elongation. In mitochondrion, specifically interacts with mt-tRNA(Met) and mediates oxidation of mt-tRNA(Met) methylated at cytosine(34) to form 5-formylcytosine (f(5)c) at this position. mt-tRNA(Met) containing the f(5)c modification at the wobble position enables recognition of the AUA codon in addition to the AUG codon, expanding codon recognition in mitochondrial translation. Specifically demethylates DNA methylated on the 6th position of adenine (N(6)-methyladenosine) DNA. N(6)-methyladenosine (m6A) DNA is present at some L1 elements in embryonic stem cells and probably promotes their silencing. Demethylates mRNAs containing N(3)-methylcytidine modification. Also able to repair alkylated single-stranded DNA by oxidative demethylation, but with low activity. Also has DNA lyase activity and introduces double-stranded breaks at abasic sites: cleaves both single-stranded DNA and double-stranded DNA at abasic sites, with the greatest activity towards double-stranded DNA with two abasic sites. DNA lyase activity does not require alpha-ketoglutarate and iron and leads to the formation of an irreversible covalent protein-DNA adduct with the 5' DNA product. DNA lyase activity is not required during base excision repair and class switch recombination of the immunoglobulin heavy chain during B lymphocyte activation. May play a role in placental trophoblast lineage differentiation. This is Nucleic acid dioxygenase ALKBH1 from Mus musculus (Mouse).